The sequence spans 349 residues: Aminomethyltransferase (349 aa).

It belongs to the GcvT family. In terms of assembly, the glycine cleavage system is composed of four proteins: P, T, L and H.

The enzyme catalyses N(6)-[(R)-S(8)-aminomethyldihydrolipoyl]-L-lysyl-[protein] + (6S)-5,6,7,8-tetrahydrofolate = N(6)-[(R)-dihydrolipoyl]-L-lysyl-[protein] + (6R)-5,10-methylene-5,6,7,8-tetrahydrofolate + NH4(+). Its function is as follows. The glycine cleavage system catalyzes the degradation of glycine. The protein is Aminomethyltransferase of Thermus thermophilus (strain ATCC BAA-163 / DSM 7039 / HB27).